Consider the following 1117-residue polypeptide: Centrosomal protein of 126 kDa (1117 aa).

Residues 1–42 are disordered; the sequence is MLAGRPGTRSAVGELGTESSDNLDRAPLGPRESGGHHRPGSY. Residues 49–121 adopt a coiled-coil conformation; the sequence is LEKNLEEERQ…EEVTEKFQRA (73 aa). Disordered regions lie at residues 643–664 and 730–759; these read AENS…QQFH and KKEE…IIRK. The segment covering 730-744 has biased composition (basic and acidic residues); sequence KKEESKIPVHDDSKT. Basic residues predominate over residues 745 to 758; sequence KQGKPQRGRAKIIR.

In terms of assembly, interacts with DCTN1. As to expression, expressed in brain, lung, skeletal muscle, kidney, pancreas, testis and ovary.

Its subcellular location is the midbody. It is found in the cytoplasm. It localises to the cytoskeleton. The protein localises to the microtubule organizing center. The protein resides in the centrosome. Its subcellular location is the cilium basal body. Functionally, participates in cytokinesis. Necessary for microtubules and mitotic spindle organization. Involved in primary cilium formation. This Homo sapiens (Human) protein is Centrosomal protein of 126 kDa.